Here is a 238-residue protein sequence, read N- to C-terminus: 1-(5-phosphoribosyl)-5-[(5-phosphoribosylamino)methylideneamino] imidazole-4-carboxamide isomerase (238 aa).

Asp-8 (proton acceptor) is an active-site residue. The Proton donor role is filled by Asp-129.

It belongs to the HisA/HisF family.

It localises to the cytoplasm. The enzyme catalyses 1-(5-phospho-beta-D-ribosyl)-5-[(5-phospho-beta-D-ribosylamino)methylideneamino]imidazole-4-carboxamide = 5-[(5-phospho-1-deoxy-D-ribulos-1-ylimino)methylamino]-1-(5-phospho-beta-D-ribosyl)imidazole-4-carboxamide. Its pathway is amino-acid biosynthesis; L-histidine biosynthesis; L-histidine from 5-phospho-alpha-D-ribose 1-diphosphate: step 4/9. The polypeptide is 1-(5-phosphoribosyl)-5-[(5-phosphoribosylamino)methylideneamino] imidazole-4-carboxamide isomerase (Myxococcus xanthus (strain DK1622)).